A 61-amino-acid polypeptide reads, in one-letter code: Metallothionein-1A (61 aa).

M1 carries the post-translational modification N-acetylmethionine. The beta stretch occupies residues 1–29; it reads MDPNCSCATGGSCTCTGSCKCKECKCTSC. 18 residues coordinate a divalent metal cation: C5, C7, C13, C15, C19, C21, C24, C26, C29, C33, C34, C36, C37, C41, C44, C48, C50, and C57. The segment at 30-61 is alpha; sequence KKSCCSCCPMSCAKCAQGCICKGASEKCSCCA. Position 58 is a phosphoserine (S58). Positions 59 and 60 each coordinate a divalent metal cation.

The protein belongs to the metallothionein superfamily. Type 1 family. Monomer.

Functionally, metallothioneins have a high content of cysteine residues that bind various heavy metals; these proteins are transcriptionally regulated by both heavy metals and glucocorticoids. This Homo sapiens (Human) protein is Metallothionein-1A (MT1A).